Consider the following 277-residue polypeptide: Co-chaperone protein DjlA (277 aa).

Over 1 to 4 (MWGK) the chain is Periplasmic. Residues 5–28 (ILGAFFGFLLGGPFGLLLGLFLGH) form a helical membrane-spanning segment. The Cytoplasmic segment spans residues 29–277 (KFDKARRNVY…DMIRKEKGFK (249 aa)). Residues 211-277 (DAYEVLGVTE…DMIRKEKGFK (67 aa)) enclose the J domain.

Homodimer.

It localises to the cell inner membrane. Regulatory DnaK co-chaperone. Direct interaction between DnaK and DjlA is needed for the induction of the wcaABCDE operon, involved in the synthesis of a colanic acid polysaccharide capsule, possibly through activation of the RcsB/RcsC phosphotransfer signaling pathway. The colanic acid capsule may help the bacterium survive conditions outside the host. This is Co-chaperone protein DjlA from Photobacterium profundum (strain SS9).